The chain runs to 902 residues: Glycogen phosphorylase (902 aa).

The tract at residues 1–21 (MPPASTSTTNDMITEEPTSPH) is disordered. A Phosphothreonine modification is found at Thr-31. The residue at position 333 (Ser-333) is a Phosphoserine. An N6-(pyridoxal phosphate)lysine modification is found at Lys-751.

Belongs to the glycogen phosphorylase family. Homodimer. Requires pyridoxal 5'-phosphate as cofactor.

It is found in the cytoplasm. It localises to the cytosol. The enzyme catalyses [(1-&gt;4)-alpha-D-glucosyl](n) + phosphate = [(1-&gt;4)-alpha-D-glucosyl](n-1) + alpha-D-glucose 1-phosphate. Its activity is regulated as follows. Activated by phosphorylation of Thr-31. Functionally, phosphorylase is an important allosteric enzyme in carbohydrate metabolism. Enzymes from different sources differ in their regulatory mechanisms and in their natural substrates. However, all known phosphorylases share catalytic and structural properties. This is Glycogen phosphorylase (GPH1) from Saccharomyces cerevisiae (strain ATCC 204508 / S288c) (Baker's yeast).